Consider the following 713-residue polypeptide: Phospholipase A1 PLIP2, chloroplastic (713 aa).

The N-terminal 32 residues, 1–32 (MDSLCLNSGLHGVIPAITAVGNGGCGGVVEVR), are a transit peptide targeting the chloroplast. Disordered stretches follow at residues 118 to 140 (WKHEEEEDDDEVEDEDGDEDEEV) and 232 to 261 (ALKAENGEVSGETKPIVEAEEEVEEEEKNK). Over residues 122 to 140 (EEEDDDEVEDEDGDEDEEV) the composition is skewed to acidic residues. Positions 426–430 (GHSLG) match the GXSXG motif. Catalysis depends on Ser-428, which acts as the Acyl-ester intermediate. Residues Asp-489 and His-608 each act as charge relay system in the active site.

It belongs to the AB hydrolase superfamily. Lipase family.

The protein resides in the plastid. The protein localises to the chloroplast membrane. It localises to the chloroplast stroma. The enzyme catalyses a 1,2-diacyl-3-O-(beta-D-galactosyl)-sn-glycerol + 2 H2O = 3-beta-D-galactosyl-sn-glycerol + 2 a fatty acid + 2 H(+). It carries out the reaction a 1,2-diacyl-sn-glycero-3-phosphocholine + H2O = a 2-acyl-sn-glycero-3-phosphocholine + a fatty acid + H(+). It catalyses the reaction 1-hexadecanoyl-2-(9Z-octadecenoyl)-sn-glycero-3-phosphocholine + H2O = 2-(9Z-octadecenoyl)-sn-glycero-3-phosphocholine + hexadecanoate + H(+). The catalysed reaction is 1,2-di-(9Z-octadecenoyl)-sn-glycero-3-phosphocholine + H2O = 2-(9Z-octadecenoyl)-sn-glycero-3-phosphocholine + (9Z)-octadecenoate + H(+). The enzyme catalyses 1-octadecanoyl-2-(9Z-octadecenoyl)-sn-glycero-3-phosphocholine + H2O = 2-(9Z-octadecenoyl)-sn-glycero-3-phosphocholine + octadecanoate + H(+). It carries out the reaction 1-octadecanoyl-2-(9Z,12Z)-octadecadienoyl-sn-glycero-3-phosphocholine + H2O = 2-(9Z,12Z-octadecadienoyl)-sn-glycero-3-phosphocholine + octadecanoate + H(+). It catalyses the reaction 1,2-di-(9Z,12Z-octadecadienoyl)-sn-glycero-3-phosphocholine + H2O = 2-(9Z,12Z-octadecadienoyl)-sn-glycero-3-phosphocholine + (9Z,12Z)-octadecadienoate + H(+). The catalysed reaction is 1-(9Z-octadecenoyl)-2-hexadecanoyl-sn-glycero-3-phosphocholine + H2O = 2-hexadecanoyl-sn-glycero-3-phosphocholine + (9Z)-octadecenoate + H(+). In terms of biological role, sn-1-specific phospholipase A1 that catalyzes the initial step of oxylipins and jasmonate (JA) biosynthesis. Hydrolyzes polyunsaturated acyl groups preferentially from chloroplastic monogalactosyldiacylglycerol (MGDG). May function downstream of abscisic acid (ABA) and provide a link between ABA-mediated abiotic stress responses and oxylipin and JA signalings. In vitro, possesses broad substrate specificity. Can hydrolyze the galactolipids monogalactosyldiacylglycerol (MGDG) and digalactosyldiacylglycerol (DGDG), the sulfolipid sulfoquinovosyldiacylglycerol (SQDG), and the phoshpolipids phosphatidylcholine (PC), and phosphatidylglycerol (PG). The sequence is that of Phospholipase A1 PLIP2, chloroplastic from Arabidopsis thaliana (Mouse-ear cress).